Reading from the N-terminus, the 448-residue chain is Methionine aminopeptidase 2 (448 aa).

A compositionally biased stretch (low complexity) spans 1–17 (MPATAEAADAATQATDA). Residues 1–87 (MPATAEAADA…QTEPPSIGLT (87 aa)) form a disordered region. Residues 21–34 (KLEENKLPEGQERG) show a composition bias toward basic and acidic residues. Over residues 35–46 (PEEEEDDDDDET) the composition is skewed to acidic residues. Residues 55 to 71 (KKKKKKKSGAKKKKSKT) are compositionally biased toward basic residues. His-200 is a substrate binding site. A divalent metal cation is bound by residues Asp-220, Asp-231, and His-300. His-308 is a substrate binding site. Positions 334 and 429 each coordinate a divalent metal cation.

Belongs to the peptidase M24A family. Methionine aminopeptidase eukaryotic type 2 subfamily. Co(2+) serves as cofactor. Requires Zn(2+) as cofactor. Mn(2+) is required as a cofactor. The cofactor is Fe(2+).

It localises to the cytoplasm. It catalyses the reaction Release of N-terminal amino acids, preferentially methionine, from peptides and arylamides.. Cotranslationally removes the N-terminal methionine from nascent proteins. The N-terminal methionine is often cleaved when the second residue in the primary sequence is small and uncharged (Met-Ala-, Cys, Gly, Pro, Ser, Thr, or Val). The polypeptide is Methionine aminopeptidase 2 (Malassezia globosa (strain ATCC MYA-4612 / CBS 7966) (Dandruff-associated fungus)).